Reading from the N-terminus, the 631-residue chain is Shootin-1 (631 aa).

At Met1 the chain carries N-acetylmethionine. A phosphoserine mark is found at Ser3 and Ser4. The stretch at 7–353 (EKQLQLITSL…RVNQSENSVP (347 aa)) forms a coiled coil. Ser101 carries the phosphoserine; by PAK1 modification. Ser249 is modified (phosphoserine). Disordered regions lie at residues 343 to 404 (KRVN…EVTD) and 417 to 508 (IKKG…KSMP). Over residues 352 to 369 (VPPPPPPPPPLPPPPPNP) the composition is skewed to pro residues. Ser375 is modified (phosphoserine). Positions 456–465 (LNKSTSSRSL) are enriched in polar residues. Residue Ser473 is modified to Phosphoserine. Phosphothreonine is present on Thr487. The span at 490 to 505 (ADSSSPTGILATSESK) shows a compositional bias: polar residues. Ser494 is modified (phosphoserine). Position 496 is a phosphothreonine (Thr496). Phosphoserine is present on residues Ser506 and Ser515. The tract at residues 530–631 (FNNPCPLTPE…KTGETDSSNC (102 aa)) is disordered. Thr537 bears the Phosphothreonine mark. The segment covering 590–602 (PQTKDQAAEKDPT) has biased composition (basic and acidic residues).

It belongs to the shootin family. In terms of assembly, interacts with L1CAM; this interaction occurs at axonal growth cones. Interacts with actin filament retrograde flow; this interaction is enhanced in a netrin-1- and PAK1-dependent manner and promotes F-actin-substrate coupling and concomitant formation of traction forces at axonal growth cones. Interacts with RUFY3. Interacts with PFN2. Interacts (via N-terminus) with KIF20B; this interaction is direct and promotes the association of SHTN1 to microtubules in primary neurons. Associates with microtubule. Phosphorylated on Ser-101 and Ser-249 by PAK1 through a CDC42- and RAC1-dependent signaling pathway, which enhances its association with F-actin retrograde flow in filopodia and lamellipodia of axonal growth cones. Phosphorylation on Ser-101 and Ser-249 is increased by netrin-1. As to expression, expressed in hippocampal neurons.

It localises to the perikaryon. Its subcellular location is the cell projection. The protein resides in the axon. The protein localises to the growth cone. It is found in the cytoplasm. It localises to the cytoskeleton. Its subcellular location is the filopodium. The protein resides in the lamellipodium. In terms of biological role, involved in the generation of internal asymmetric signals required for neuronal polarization and neurite outgrowth. Mediates netrin-1-induced F-actin-substrate coupling or 'clutch engagement' within the axon growth cone through activation of CDC42, RAC1 and PAK1-dependent signaling pathway, thereby converting the F-actin retrograde flow into traction forces, concomitantly with filopodium extension and axon outgrowth. Plays a role in cytoskeletal organization by regulating the subcellular localization of phosphoinositide 3-kinase (PI3K) activity at the axonal growth cone. Also plays a role in regenerative neurite outgrowth. In the developing cortex, cooperates with KIF20B to promote both the transition from the multipolar to the bipolar stage and the radial migration of cortical neurons from the ventricular zone toward the superficial layer of the neocortex. Involved in the accumulation of phosphatidylinositol 3,4,5-trisphosphate (PIP3) in the growth cone of primary hippocampal neurons. The protein is Shootin-1 of Mus musculus (Mouse).